We begin with the raw amino-acid sequence, 355 residues long: Peptide chain release factor 1 (355 aa).

Q233 bears the N5-methylglutamine mark. The segment covering 283–293 (EKNKDRADARK) has biased composition (basic and acidic residues). Positions 283-304 (EKNKDRADARKSQVGTGDRSER) are disordered.

The protein belongs to the prokaryotic/mitochondrial release factor family. Methylated by PrmC. Methylation increases the termination efficiency of RF1.

The protein localises to the cytoplasm. Peptide chain release factor 1 directs the termination of translation in response to the peptide chain termination codons UAG and UAA. The protein is Peptide chain release factor 1 of Finegoldia magna (strain ATCC 29328 / DSM 20472 / WAL 2508) (Peptostreptococcus magnus).